Reading from the N-terminus, the 296-residue chain is GTP cyclohydrolase FolE2 (296 aa).

This sequence belongs to the GTP cyclohydrolase IV family.

The catalysed reaction is GTP + H2O = 7,8-dihydroneopterin 3'-triphosphate + formate + H(+). It functions in the pathway cofactor biosynthesis; 7,8-dihydroneopterin triphosphate biosynthesis; 7,8-dihydroneopterin triphosphate from GTP: step 1/1. Functionally, converts GTP to 7,8-dihydroneopterin triphosphate. The polypeptide is GTP cyclohydrolase FolE2 (Ectopseudomonas mendocina (strain ymp) (Pseudomonas mendocina)).